Reading from the N-terminus, the 743-residue chain is Phosphoribosylformylglycinamidine synthase subunit PurL (743 aa).

Histidine 50 is a catalytic residue. ATP is bound by residues tyrosine 53 and lysine 92. Glutamate 94 serves as a coordination point for Mg(2+). Substrate contacts are provided by residues 95 to 98 (SHNH) and arginine 117. The active-site Proton acceptor is the histidine 96. Aspartate 118 is a binding site for Mg(2+). Glutamine 241 is a binding site for substrate. Aspartate 269 contacts Mg(2+). 313–315 (ESQ) is a substrate binding site. ATP is bound by residues aspartate 494 and glycine 531. Residue asparagine 532 coordinates Mg(2+). Serine 534 serves as a coordination point for substrate.

Belongs to the FGAMS family. As to quaternary structure, monomer. Part of the FGAM synthase complex composed of 1 PurL, 1 PurQ and 2 PurS subunits.

The protein localises to the cytoplasm. It carries out the reaction N(2)-formyl-N(1)-(5-phospho-beta-D-ribosyl)glycinamide + L-glutamine + ATP + H2O = 2-formamido-N(1)-(5-O-phospho-beta-D-ribosyl)acetamidine + L-glutamate + ADP + phosphate + H(+). It participates in purine metabolism; IMP biosynthesis via de novo pathway; 5-amino-1-(5-phospho-D-ribosyl)imidazole from N(2)-formyl-N(1)-(5-phospho-D-ribosyl)glycinamide: step 1/2. Part of the phosphoribosylformylglycinamidine synthase complex involved in the purines biosynthetic pathway. Catalyzes the ATP-dependent conversion of formylglycinamide ribonucleotide (FGAR) and glutamine to yield formylglycinamidine ribonucleotide (FGAM) and glutamate. The FGAM synthase complex is composed of three subunits. PurQ produces an ammonia molecule by converting glutamine to glutamate. PurL transfers the ammonia molecule to FGAR to form FGAM in an ATP-dependent manner. PurS interacts with PurQ and PurL and is thought to assist in the transfer of the ammonia molecule from PurQ to PurL. The chain is Phosphoribosylformylglycinamidine synthase subunit PurL from Sinorhizobium medicae (strain WSM419) (Ensifer medicae).